The sequence spans 134 residues: Small ribosomal subunit protein uS9 (134 aa).

The interval 113–134 is disordered; sequence REVERKKYGLKKARRAPQFSKR. Basic residues predominate over residues 120-134; the sequence is YGLKKARRAPQFSKR.

It belongs to the universal ribosomal protein uS9 family.

The polypeptide is Small ribosomal subunit protein uS9 (Thermotoga petrophila (strain ATCC BAA-488 / DSM 13995 / JCM 10881 / RKU-1)).